The following is a 485-amino-acid chain: Glutamyl-tRNA(Gln) amidotransferase subunit A (485 aa).

Residues lysine 78 and serine 153 each act as charge relay system in the active site. Serine 177 serves as the catalytic Acyl-ester intermediate.

Belongs to the amidase family. GatA subfamily. As to quaternary structure, heterotrimer of A, B and C subunits.

The catalysed reaction is L-glutamyl-tRNA(Gln) + L-glutamine + ATP + H2O = L-glutaminyl-tRNA(Gln) + L-glutamate + ADP + phosphate + H(+). Functionally, allows the formation of correctly charged Gln-tRNA(Gln) through the transamidation of misacylated Glu-tRNA(Gln) in organisms which lack glutaminyl-tRNA synthetase. The reaction takes place in the presence of glutamine and ATP through an activated gamma-phospho-Glu-tRNA(Gln). The sequence is that of Glutamyl-tRNA(Gln) amidotransferase subunit A from Desulfotalea psychrophila (strain LSv54 / DSM 12343).